The primary structure comprises 406 residues: 4-hydroxy-3-methylbut-2-en-1-yl diphosphate synthase (flavodoxin) (406 aa).

The [4Fe-4S] cluster site is built by Cys297, Cys300, Cys343, and Glu350.

The protein belongs to the IspG family. The cofactor is [4Fe-4S] cluster.

It catalyses the reaction (2E)-4-hydroxy-3-methylbut-2-enyl diphosphate + oxidized [flavodoxin] + H2O + 2 H(+) = 2-C-methyl-D-erythritol 2,4-cyclic diphosphate + reduced [flavodoxin]. It participates in isoprenoid biosynthesis; isopentenyl diphosphate biosynthesis via DXP pathway; isopentenyl diphosphate from 1-deoxy-D-xylulose 5-phosphate: step 5/6. Functionally, converts 2C-methyl-D-erythritol 2,4-cyclodiphosphate (ME-2,4cPP) into 1-hydroxy-2-methyl-2-(E)-butenyl 4-diphosphate. The protein is 4-hydroxy-3-methylbut-2-en-1-yl diphosphate synthase (flavodoxin) of Thermus thermophilus (strain ATCC 27634 / DSM 579 / HB8).